The following is a 430-amino-acid chain: Histidinol dehydrogenase (430 aa).

Residues Y131, Q192, and N215 each contribute to the NAD(+) site. Residues S238, Q260, and H263 each coordinate substrate. Positions 260 and 263 each coordinate Zn(2+). Catalysis depends on proton acceptor residues E328 and H329. The substrate site is built by H329, D362, E416, and H421. D362 contacts Zn(2+). A Zn(2+)-binding site is contributed by H421.

Belongs to the histidinol dehydrogenase family. It depends on Zn(2+) as a cofactor.

The catalysed reaction is L-histidinol + 2 NAD(+) + H2O = L-histidine + 2 NADH + 3 H(+). The protein operates within amino-acid biosynthesis; L-histidine biosynthesis; L-histidine from 5-phospho-alpha-D-ribose 1-diphosphate: step 9/9. Its function is as follows. Catalyzes the sequential NAD-dependent oxidations of L-histidinol to L-histidinaldehyde and then to L-histidine. This chain is Histidinol dehydrogenase, found in Acinetobacter baylyi (strain ATCC 33305 / BD413 / ADP1).